The sequence spans 510 residues: AAA-ATPase At3g28540 (510 aa).

The helical transmembrane segment at 7-25 (LFGFTGTTMASLMFFWSVY) threads the bilayer. 246–253 (GPPGTGKS) contributes to the ATP binding site. A disordered region spans residues 460 to 510 (KEKAKKLAEEEKMKKAARDARRIKKKAEEEHKKKNKVEENGDVSHDNGNHI).

It belongs to the AAA ATPase family. BCS1 subfamily. Mg(2+) is required as a cofactor.

The protein localises to the membrane. The catalysed reaction is ATP + H2O = ADP + phosphate + H(+). The protein is AAA-ATPase At3g28540 of Arabidopsis thaliana (Mouse-ear cress).